The sequence spans 153 residues: Ribosome maturation factor RimP (153 aa).

This sequence belongs to the RimP family.

The protein resides in the cytoplasm. In terms of biological role, required for maturation of 30S ribosomal subunits. This chain is Ribosome maturation factor RimP, found in Rippkaea orientalis (strain PCC 8801 / RF-1) (Cyanothece sp. (strain PCC 8801)).